The sequence spans 457 residues: Probable xyloglucan 6-xylosyltransferase 3 (457 aa).

A disordered region spans residues 1-40 (MGKEDGFRTQKRVSTASSAAAGVLPTTMASGGVRRPPPRG). Topologically, residues 1 to 51 (MGKEDGFRTQKRVSTASSAAAGVLPTTMASGGVRRPPPRGRQIQKTFNNVK) are cytoplasmic. Residues 52-71 (MTILCGFVTILVLRGTIGIN) form a helical; Signal-anchor for type II membrane protein membrane-spanning segment. Over 72–457 (FGTSDADVVN…TTPLKIEARS (386 aa)) the chain is Lumenal. N-linked (GlcNAc...) asparagine glycosylation is found at asparagine 115 and asparagine 431.

The protein belongs to the glycosyltransferase 34 family.

The protein resides in the golgi apparatus membrane. It carries out the reaction Transfers an alpha-D-xylosyl residue from UDP-D-xylose to a glucose residue in xyloglucan, forming an alpha-(1-&gt;6)-D-xylosyl-D-glucose linkage.. Functionally, probable xyloglucan xylosyltransferase involved in the biosynthesis of xyloglucan. The polypeptide is Probable xyloglucan 6-xylosyltransferase 3 (Arabidopsis thaliana (Mouse-ear cress)).